We begin with the raw amino-acid sequence, 766 residues long: FYVE, RhoGEF and PH domain-containing protein 4 (766 aa).

The tract at residues 1–150 is actin filament-binding; that stretch reads MEESNPAPTS…SSIANSHDEN (150 aa). Polar residues-rich tracts occupy residues 47 to 62 and 70 to 85; these read LNIP…TSSP and HSPQ…TQGQ. 2 disordered regions span residues 47–86 and 143–173; these read LNIP…QGQH and IANS…GEPG. In terms of domain architecture, DH spans 206-393; it reads KLHKIATELL…STAASHSNSA (188 aa). In terms of domain architecture, PH 1 spans 422–521; sequence ELIKEGQILK…WIKALQESID (100 aa). Residues 559-619 form an FYVE-type zinc finger; the sequence is DNEVTMCMKC…VCKDCYQIIS (61 aa). Zn(2+) is bound by residues cysteine 565, cysteine 568, cysteine 582, cysteine 585, cysteine 590, cysteine 593, cysteine 611, and cysteine 614. In terms of domain architecture, PH 2 spans 643-740; it reads NSEVCSFLQY…WLKIILLAVT (98 aa). Phosphoserine is present on residues serine 702 and serine 716. Positions 746-766 are disordered; it reads GPSEHLATLNNLPGPKKKSEC.

In terms of assembly, homooligomer. Detected in thymus, lung, heart, skeletal muscle, small intestine, liver, kidney, spleen and testis. Expressed in all parts of the brain and in the spinal cord at embryonic, postnatal, and adult stages. Levels of expression are lower in postnatal and adult tissues than in embryonic tissues.

The protein localises to the cytoplasm. It is found in the cytoskeleton. The protein resides in the cell projection. It localises to the filopodium. Activates CDC42, a member of the Ras-like family of Rho- and Rac proteins, by exchanging bound GDP for free GTP. Activates MAPK8. Plays a role in regulating the actin cytoskeleton and cell shape. Promotes the formation of lamellipodia. The chain is FYVE, RhoGEF and PH domain-containing protein 4 (Fgd4) from Mus musculus (Mouse).